We begin with the raw amino-acid sequence, 332 residues long: Ketol-acid reductoisomerase (NAD(+)) (332 aa).

One can recognise a KARI N-terminal Rossmann domain in the interval 1–186; that stretch reads MEILHDEDVD…HWTKAGILEC (186 aa). Residues 24–27, Glu46, Asn55, Ser57, and 87–90 contribute to the NAD(+) site; these read YGAQ and DEVQ. The active site involves His112. Position 138 (Gly138) interacts with NAD(+). One can recognise a KARI C-terminal knotted domain in the interval 187 to 332; it reads TFEQETYEDL…AEIRKLFAQK (146 aa). Asp195, Glu199, Glu231, and Glu235 together coordinate Mg(2+). Ser256 is a substrate binding site.

The protein belongs to the ketol-acid reductoisomerase family. In terms of assembly, homodimer. The cofactor is Mg(2+).

The enzyme catalyses (2R)-2,3-dihydroxy-3-methylbutanoate + NAD(+) = (2S)-2-acetolactate + NADH + H(+). Its pathway is amino-acid biosynthesis; L-isoleucine biosynthesis; L-isoleucine from 2-oxobutanoate: step 2/4. It functions in the pathway amino-acid biosynthesis; L-valine biosynthesis; L-valine from pyruvate: step 2/4. Its function is as follows. Involved in the biosynthesis of branched-chain amino acids (BCAA). Catalyzes an alkyl-migration followed by a ketol-acid reduction of (S)-2-acetolactate (S2AL) to yield (R)-2,3-dihydroxy-isovalerate. In the isomerase reaction, S2AL is rearranged via a Mg-dependent methyl migration to produce 3-hydroxy-3-methyl-2-ketobutyrate (HMKB). In the reductase reaction, this 2-ketoacid undergoes a metal-dependent reduction by NADH to yield (R)-2,3-dihydroxy-isovalerate. The chain is Ketol-acid reductoisomerase (NAD(+)) from Uncultured archaeon GZfos26G2.